Reading from the N-terminus, the 630-residue chain is Putative adenylate cyclase regulatory protein (630 aa).

The segment at 10–46 (CAVCREPWAEGALELFPCRHVFCTVCVVERWRCPSCQ) adopts an RING-type zinc-finger fold. 18 LRR repeats span residues 184-206 (FLVHLEVDGSRGVTDITGLCRLK), 207-230 (TLEALSLDSCINITKGFDKICALP), 231-251 (QLTSLSLCQTNVTDKDLRCIH), 255-277 (KLKVLRYSSCHEITDLTAIGGMR), 278-301 (SLEKLSLSGCWNVTKGLEELCKFS), 302-324 (NLRELDISGCLVLGSAVVLKNLI), 325-347 (NLKVLSVSNCKNFKDLNGLERLV), 348-370 (NLDKLNLSGCHGVSSLGFVANLS), 371-393 (NLKELDISGCESLVCFDGLQDLN), 394-416 (NLEVLYLRDVKSFTNVGAIKNLS), 417-439 (KMRELDLSGCERITSLSGLETLK), 440-462 (GLEELSLEGCGEIMSFDPIWSLH), 463-485 (HLRVLYVSECGNLEDLSGLEGIT), 486-508 (GLEELYLHGCRKCTNFGPIWNLR), 509-531 (NVCVVELSCCENLEDLSGLQCLT), 532-554 (GLEELYLIGCEEITPIGVVGNLR), 555-577 (NLKCLSTCWCANLKELGGLDRLV), and 578-599 (NLEKLDLSGCCGLSSSVFMELM).

Functionally, may interact with adenylate cyclase to regulate its activity. In terms of biological role, may be involved in the postranscriptional regulation of genes in VSG expression sites. This chain is Putative adenylate cyclase regulatory protein (ESAG8C), found in Trypanosoma equiperdum.